A 142-amino-acid polypeptide reads, in one-letter code: Large ribosomal subunit protein uL24 (142 aa).

Over residues 1 to 11 the composition is skewed to polar residues; that stretch reads MKVNPFVSSDS. The tract at residues 1-24 is disordered; sequence MKVNPFVSSDSGKSRKAHFNAPSH.

It belongs to the universal ribosomal protein uL24 family.

This is Large ribosomal subunit protein uL24 (rpl-26) from Caenorhabditis elegans.